The primary structure comprises 264 residues: Short chain dehydrogenase/reductase AacuN (264 aa).

Residues I24, D70, N97, and R130 each contribute to the NADP(+) site. Active-site proton donor residues include S146, S147, and Y161. NADP(+) is bound by residues Y161, K165, and T196. K165 serves as the catalytic Lowers pKa of active site Tyr.

The protein belongs to the short-chain dehydrogenases/reductases (SDR) family.

The enzyme catalyses 3,8,9,10-tetrahydroxy-6-methyl-1,4-dihydroanthracen-1-one + NADPH + H(+) = (3R)-3,8,9,10-tetrahydroxy-6-methyl-1,2,3,4-tetrahydroanthracen-1-one + NADP(+). Its pathway is secondary metabolite biosynthesis. Its function is as follows. Atrochrysone carboxylic acid synthase; part of the gene cluster that mediates the biosynthesis of the tetrahydroxanthone dimer secalonic acid D. The pathway begins with the synthesis of atrochrysone thioester by the polyketide synthase AacuL. The atrochrysone carboxyl ACP thioesterase AacuM then breaks the thioester bond and releases the atrochrysone carboxylic acid from AacuL. Atrochrysone carboxylic acid is decarboxylated by the decarboxylase AacuI, and oxidized by the anthrone oxygenase AacuG to yield emodin. Emodin is then reduced to emodin hydroquinone by a yet unidentified oxidoreductase. A-ring reduction by the short chain dehydrogenase AacuN, dehydration by the scytalone dehydratase-like protein AacuK and probable spontaneous re-oxidation, results in overall deoxygenation to chrysophanol. Baeyer-Villiger oxidation by the Baeyer-Villiger monooxygenase (BVMO) AacuH then yields monodictyphenone. Monodictyphenone is transformed into compounds with the tetrahydroxanthone skeleton via methylesterification by the methyltransferase AacuQ, followed by the action of the flavin-dependent monooxygenase AacuC, the isomerase AacuP, and the short chain dehydrogenase/reductase AacuF or AacuD. AacuF and AacuD should accept the same compound as a substrate but perform the ketoreduction with a different stereoselectivity, thus yielding blennolides B and A, respectively. In the final step of the biosynthesis, the cytochrome P450 monooxygenase AacuE accepts blennolide B and/or blennolide A to conduct the dimerization reaction to furnish the tetrahydroxanthone dimers, secalonic acids D, B, and F. In Aspergillus aculeatus (strain ATCC 16872 / CBS 172.66 / WB 5094), this protein is Short chain dehydrogenase/reductase AacuN.